The sequence spans 576 residues: CTP synthase (576 aa).

The Glutamine amidotransferase type-1 domain occupies 305-559; that stretch reads QIALVGKYTH…LGLVAAAANI (255 aa). Residues Cys404, His535, and Glu537 each act as for GATase activity in the active site.

It belongs to the CTP synthase family.

It catalyses the reaction UTP + L-glutamine + ATP + H2O = CTP + L-glutamate + ADP + phosphate + 2 H(+). It functions in the pathway pyrimidine metabolism; CTP biosynthesis via de novo pathway; CTP from UDP: step 2/2. Functionally, catalyzes the ATP-dependent amination of UTP to CTP with either L-glutamine or ammonia as the source of nitrogen. In Eremothecium gossypii (strain ATCC 10895 / CBS 109.51 / FGSC 9923 / NRRL Y-1056) (Yeast), this protein is CTP synthase (URA7).